A 600-amino-acid chain; its full sequence is Aspartate--tRNA(Asp/Asn) ligase (600 aa).

Glutamate 181 is an L-aspartate binding site. Residues 205–208 (QQFK) form an aspartate region. Residue arginine 227 coordinates L-aspartate. Residues 227–229 (RDE) and glutamine 236 each bind ATP. An L-aspartate-binding site is contributed by histidine 455. Position 489 (glutamate 489) interacts with ATP. Arginine 496 lines the L-aspartate pocket. An ATP-binding site is contributed by 541-544 (GIDR).

This sequence belongs to the class-II aminoacyl-tRNA synthetase family. Type 1 subfamily. Homodimer.

The protein resides in the cytoplasm. It carries out the reaction tRNA(Asx) + L-aspartate + ATP = L-aspartyl-tRNA(Asx) + AMP + diphosphate. In terms of biological role, aspartyl-tRNA synthetase with relaxed tRNA specificity since it is able to aspartylate not only its cognate tRNA(Asp) but also tRNA(Asn). Reaction proceeds in two steps: L-aspartate is first activated by ATP to form Asp-AMP and then transferred to the acceptor end of tRNA(Asp/Asn). This Rubrobacter xylanophilus (strain DSM 9941 / JCM 11954 / NBRC 16129 / PRD-1) protein is Aspartate--tRNA(Asp/Asn) ligase.